The following is a 27-amino-acid chain: iraD leader peptide (27 aa).

A short protein whose stop codon overlaps with the start codon of downstream iraD; its mRNA secondary structure is predicted to fold and sequester the Shine-Dalgarno sequence of iraD. When this protein is expressed the downstream iraD is also expressed due to ribosomal coupling. The polypeptide is iraD leader peptide (idlP) (Escherichia coli (strain K12)).